The following is a 498-amino-acid chain: Na(+)/H(+) exchange regulatory cofactor NHE-RF4 (498 aa).

PDZ domains are found at residues 49 to 130 (FCLL…LAQH), 157 to 235 (LCHV…AGLE), 263 to 346 (CLNI…VDPE), and 394 to 475 (QCFL…GARN). Phosphoserine is present on Ser-329.

In terms of assembly, interacts with the C-terminal region of GUCY2C. Interacts with C-terminal region of SLC9A3 and the interactions decrease in response to elevated calcium ion levels. Interacts with the C-terminal region of SLC34A1. Interacts with USP2 isoform 2. Interacts (via the third PDZ domain) with SLC26A3 (via PDZ-binding motif). This interaction leads to decreased expression of SLC26A3 on the cell membrane resulting in its reduced exchanger activity. Post-translationally, phosphorylation at Ser-329 negatively regulates its interaction with SLC26A3. As to expression, expressed in kidney and small intestine. Not detected in heart, brain, spleen, lung, liver, skeletal muscle or testis.

It is found in the cell membrane. Its subcellular location is the cytoplasm. In terms of biological role, acts as a regulatory protein that associates with GUCY2C and negatively modulates its heat-stable enterotoxin-mediated activation. Stimulates SLC9A3 activity in the presence of elevated calcium ions. This is Na(+)/H(+) exchange regulatory cofactor NHE-RF4 (Nherf4) from Mus musculus (Mouse).